The chain runs to 454 residues: MSLNVVILAAGKGTRMRSDLPKVLHPIAHKSMVQHVIDTANSLGSSAIQLVYGYGADKLQAALGEQALNWVLQAEQLGTGHAVAQANPNINDDDTVLILYGDVPLIQQSTLEALLAVRPTNGLAILTVNLPNPTGYGRIVREQGKVVGIIEQKDANAEQLAINEVNTGIMAVPGKQLKAWLNRLSNNNAQGEYYLTDIIAMANVDGVEITTSQPQSAIEVEGANNRVQLAQLERAYQARAAEKMMLEGANLRDPARIDIRGDVSVGMDVMIDVNVIFQGKVTLGNNVTIGAGAILIDCDIADNAEIKPYTIVEGAKLGQAASAGPFARLRPGAELKEDAHIGNFVEIKKSVLGKGSKAGHLAYLGDAQIGAGVNIGAGTITCNYDGANKFITTIEDGVFVGSDTQLVAPVTIGKNATLGAGSTITKDVAENELVITRVKQRHITGWQRPIKIKK.

The interval 1 to 226 (MSLNVVILAA…AIEVEGANNR (226 aa)) is pyrophosphorylase. UDP-N-acetyl-alpha-D-glucosamine is bound by residues 8–11 (LAAG), Lys-22, Gln-73, 78–79 (GT), 100–102 (YGD), Gly-137, Glu-151, Asn-166, and Asn-224. Position 102 (Asp-102) interacts with Mg(2+). Asn-224 is a binding site for Mg(2+). Residues 227-247 (VQLAQLERAYQARAAEKMMLE) form a linker region. Positions 248–454 (GANLRDPARI…GWQRPIKIKK (207 aa)) are N-acetyltransferase. UDP-N-acetyl-alpha-D-glucosamine is bound by residues Arg-330 and Lys-348. His-360 serves as the catalytic Proton acceptor. Tyr-363 and Asn-374 together coordinate UDP-N-acetyl-alpha-D-glucosamine. Acetyl-CoA contacts are provided by residues Ala-377, 383 to 384 (NY), Ser-402, Ala-420, and Arg-437.

The protein in the N-terminal section; belongs to the N-acetylglucosamine-1-phosphate uridyltransferase family. In the C-terminal section; belongs to the transferase hexapeptide repeat family. Homotrimer. Mg(2+) serves as cofactor.

It is found in the cytoplasm. It carries out the reaction alpha-D-glucosamine 1-phosphate + acetyl-CoA = N-acetyl-alpha-D-glucosamine 1-phosphate + CoA + H(+). It catalyses the reaction N-acetyl-alpha-D-glucosamine 1-phosphate + UTP + H(+) = UDP-N-acetyl-alpha-D-glucosamine + diphosphate. The protein operates within nucleotide-sugar biosynthesis; UDP-N-acetyl-alpha-D-glucosamine biosynthesis; N-acetyl-alpha-D-glucosamine 1-phosphate from alpha-D-glucosamine 6-phosphate (route II): step 2/2. It participates in nucleotide-sugar biosynthesis; UDP-N-acetyl-alpha-D-glucosamine biosynthesis; UDP-N-acetyl-alpha-D-glucosamine from N-acetyl-alpha-D-glucosamine 1-phosphate: step 1/1. Its pathway is bacterial outer membrane biogenesis; LPS lipid A biosynthesis. Catalyzes the last two sequential reactions in the de novo biosynthetic pathway for UDP-N-acetylglucosamine (UDP-GlcNAc). The C-terminal domain catalyzes the transfer of acetyl group from acetyl coenzyme A to glucosamine-1-phosphate (GlcN-1-P) to produce N-acetylglucosamine-1-phosphate (GlcNAc-1-P), which is converted into UDP-GlcNAc by the transfer of uridine 5-monophosphate (from uridine 5-triphosphate), a reaction catalyzed by the N-terminal domain. The protein is Bifunctional protein GlmU of Shewanella frigidimarina (strain NCIMB 400).